The primary structure comprises 564 residues: Proline--tRNA ligase (564 aa).

The protein belongs to the class-II aminoacyl-tRNA synthetase family. ProS type 1 subfamily. Homodimer.

It is found in the cytoplasm. The enzyme catalyses tRNA(Pro) + L-proline + ATP = L-prolyl-tRNA(Pro) + AMP + diphosphate. Its function is as follows. Catalyzes the attachment of proline to tRNA(Pro) in a two-step reaction: proline is first activated by ATP to form Pro-AMP and then transferred to the acceptor end of tRNA(Pro). As ProRS can inadvertently accommodate and process non-cognate amino acids such as alanine and cysteine, to avoid such errors it has two additional distinct editing activities against alanine. One activity is designated as 'pretransfer' editing and involves the tRNA(Pro)-independent hydrolysis of activated Ala-AMP. The other activity is designated 'posttransfer' editing and involves deacylation of mischarged Ala-tRNA(Pro). The misacylated Cys-tRNA(Pro) is not edited by ProRS. This chain is Proline--tRNA ligase, found in Xylella fastidiosa (strain 9a5c).